Reading from the N-terminus, the 369-residue chain is Phospho-N-acetylmuramoyl-pentapeptide-transferase (369 aa).

Helical transmembrane passes span Ala-3–Ile-23, Gly-53–Trp-73, Val-81–Leu-101, Trp-118–Leu-138, Phe-162–Val-182, Leu-198–Phe-218, Pro-240–Trp-260, Ile-267–Leu-287, Thr-290–Leu-310, and Phe-347–Ile-367.

Belongs to the glycosyltransferase 4 family. MraY subfamily. It depends on Mg(2+) as a cofactor.

It localises to the cell membrane. It carries out the reaction UDP-N-acetyl-alpha-D-muramoyl-L-alanyl-gamma-D-glutamyl-meso-2,6-diaminopimeloyl-D-alanyl-D-alanine + di-trans,octa-cis-undecaprenyl phosphate = di-trans,octa-cis-undecaprenyl diphospho-N-acetyl-alpha-D-muramoyl-L-alanyl-D-glutamyl-meso-2,6-diaminopimeloyl-D-alanyl-D-alanine + UMP. It functions in the pathway cell wall biogenesis; peptidoglycan biosynthesis. Its function is as follows. Catalyzes the initial step of the lipid cycle reactions in the biosynthesis of the cell wall peptidoglycan: transfers peptidoglycan precursor phospho-MurNAc-pentapeptide from UDP-MurNAc-pentapeptide onto the lipid carrier undecaprenyl phosphate, yielding undecaprenyl-pyrophosphoryl-MurNAc-pentapeptide, known as lipid I. This is Phospho-N-acetylmuramoyl-pentapeptide-transferase from Clavibacter michiganensis subsp. michiganensis (strain NCPPB 382).